Consider the following 890-residue polypeptide: Possible lysine-specific histone demethylase 1 (890 aa).

The span at 1-13 (MKPTQFGGSSSKM) shows a compositional bias: polar residues. A disordered region spans residues 1 to 164 (MKPTQFGGSS…TVLSGQEGAV (164 aa)). Phosphoserine occurs at positions 24 and 27. Over residues 84 to 109 (NRPSGSGDTASNDKSGSASMGPNNQQ) the composition is skewed to polar residues. The segment covering 110–122 (AERRSQSQTRKSE) has biased composition (basic and acidic residues). Residues 123–138 (ANATSSSVSGPSAGNS) show a composition bias toward low complexity. In terms of domain architecture, SWIRM spans 160–259 (QEGAVFQSRL…FGIFKRLKPI (100 aa)). 267–295 (VIVIGAGISGLAVAHQLQQFGMDVIVLEA) is an FAD binding site. Positions 860-890 (DLSPNLSDSSPSSKKSEENSNSNTADSTELQ) are disordered. A compositionally biased stretch (low complexity) spans 861–882 (LSPNLSDSSPSSKKSEENSNSN). A Phosphoserine modification is found at Ser-866.

The protein belongs to the flavin monoamine oxidase family. In terms of assembly, component of a complex that contains at least HDAC1/Rpd3, CoRest and Su(var)3-3/Hdm. It depends on FAD as a cofactor.

The protein localises to the nucleus. It is found in the chromosome. Probable histone demethylase that specifically demethylates 'Lys-4' of histone H3, a specific tag for epigenetic transcriptional activation, thereby acting as a corepressor. Required for heterochromatic gene silencing. Acts by oxidizing the substrate by FAD to generate the corresponding imine that is subsequently hydrolyzed. Demethylates both mono- and tri-methylated 'Lys-4' of histone H3. May also demethylate 'Lys-9' of histone H3, Plays a role in the repression of neuronal genes. The protein is Possible lysine-specific histone demethylase 1 (Su(var)3-3) of Drosophila melanogaster (Fruit fly).